Here is a 527-residue protein sequence, read N- to C-terminus: Probable pectinesterase/pectinesterase inhibitor 32 (527 aa).

A signal peptide spans 1–24 (MAKFRQMGSSIFFLFLIIISLCSA). Residues 25 to 165 (HKEAFSSTDL…GTTVRNLLTM (141 aa)) form a pectinesterase inhibitor 32 region. Asn110, Asn209, Asn224, and Asn280 each carry an N-linked (GlcNAc...) asparagine glycan. Residues 214 to 511 (DAVVAADGTG…FTVSQLIQGN (298 aa)) form a pectinesterase 32 region. Substrate contacts are provided by Thr289 and Gln319. Asp342 functions as the Proton donor; for pectinesterase activity in the catalytic mechanism. Cys356 and Cys376 are oxidised to a cystine. The Nucleophile; for pectinesterase activity role is filled by Asp363. N-linked (GlcNAc...) asparagine glycosylation is present at Asn423. Substrate contacts are provided by Arg431 and Trp433. Asn494 and Asn501 each carry an N-linked (GlcNAc...) asparagine glycan.

It in the N-terminal section; belongs to the PMEI family. The protein in the C-terminal section; belongs to the pectinesterase family. As to expression, expressed in siliques.

It localises to the secreted. The protein localises to the cell wall. It carries out the reaction [(1-&gt;4)-alpha-D-galacturonosyl methyl ester](n) + n H2O = [(1-&gt;4)-alpha-D-galacturonosyl](n) + n methanol + n H(+). It functions in the pathway glycan metabolism; pectin degradation; 2-dehydro-3-deoxy-D-gluconate from pectin: step 1/5. In terms of biological role, acts in the modification of cell walls via demethylesterification of cell wall pectin. The protein is Probable pectinesterase/pectinesterase inhibitor 32 (PME32) of Arabidopsis thaliana (Mouse-ear cress).